Here is a 188-residue protein sequence, read N- to C-terminus: CASP-like protein 4B1 (188 aa).

Over residues 1–11 (MTNPDKQKPVE) the composition is skewed to basic and acidic residues. The disordered stretch occupies residues 1-34 (MTNPDKQKPVEVTDVETAAEKTSEPTPASGTSTI). Over 1–46 (MTNPDKQKPVEVTDVETAAEKTSEPTPASGTSTITQRWKREDLIKK) the chain is Cytoplasmic. Residues 24 to 34 (EPTPASGTSTI) show a composition bias toward polar residues. The helical transmembrane segment at 47-67 (ASPITRGICLLFSLLAFLIMV) threads the bilayer. The Extracellular segment spans residues 68–84 (SNKHGYGRNFNEYEEYR). Residues 85-105 (YVLAISIISTLYTAWQTFAHF) traverse the membrane as a helical segment. The Cytoplasmic portion of the chain corresponds to 106–120 (SKREFFDRRTSTLVD). Residues 121–141 (FSGDQIVAYLLISAASSAIPL) form a helical membrane-spanning segment. Topologically, residues 142-156 (TNRFREGQDNIFTDS) are extracellular. A helical membrane pass occupies residues 157-177 (AASAISMAIFAFVALALSALF). Topologically, residues 178 to 188 (SGYKLSTHSFI) are cytoplasmic.

The protein belongs to the Casparian strip membrane proteins (CASP) family. In terms of assembly, homodimer and heterodimers.

The protein resides in the cell membrane. The chain is CASP-like protein 4B1 from Arabidopsis lyrata subsp. lyrata (Lyre-leaved rock-cress).